A 343-amino-acid polypeptide reads, in one-letter code: S-adenosylmethionine:tRNA ribosyltransferase-isomerase (343 aa).

The protein belongs to the QueA family. Monomer.

It localises to the cytoplasm. It carries out the reaction 7-aminomethyl-7-carbaguanosine(34) in tRNA + S-adenosyl-L-methionine = epoxyqueuosine(34) in tRNA + adenine + L-methionine + 2 H(+). The protein operates within tRNA modification; tRNA-queuosine biosynthesis. Functionally, transfers and isomerizes the ribose moiety from AdoMet to the 7-aminomethyl group of 7-deazaguanine (preQ1-tRNA) to give epoxyqueuosine (oQ-tRNA). This chain is S-adenosylmethionine:tRNA ribosyltransferase-isomerase, found in Stenotrophomonas maltophilia (strain R551-3).